Reading from the N-terminus, the 2297-residue chain is Serine/threonine-protein kinase WNK2 (2297 aa).

Residues 1-10 (MDGDGGRRDV) show a composition bias toward basic and acidic residues. 2 disordered regions span residues 1-75 (MDGD…QRRV) and 89-183 (ARGR…EDDL). Omega-N-methylarginine is present on residues R19 and R30. A Phosphoserine modification is found at S45. A compositionally biased stretch (low complexity) spans 92-120 (RPAAPAPAALVAQPGAPGAPADAGPEPVG). Positions 142–172 (GPREEAAATVRKEDEGAAEAKPEPGRTRRDE) are enriched in basic and acidic residues. Acidic residues predominate over residues 173 to 182 (PEEEEDDEDD). One can recognise a Protein kinase domain in the interval 195-453 (LKFDIELGRG…IKDLLSHAFF (259 aa)). Residues S205, 275–278 (TELM), and K325 contribute to the ATP site. Catalysis depends on D342, which acts as the Proton acceptor. Phosphoserine; by autocatalysis occurs at positions 352 and 356. S560 is modified (phosphoserine). Disordered regions lie at residues 579–630 (AQAG…DSQS), 699–751 (FPDP…PVVP), 917–1022 (PQMA…PGSQ), 1117–1185 (PVQE…ERAS), 1262–1297 (SEDTDADRGSDPGTSPPHLSTCGLGTGEESRQSQAN), 1323–1345 (APEAPESSPPLPLSSLPPEASQG), 1374–1480 (SAQS…HEAP), and 1492–1586 (PCTP…DSTI). The span at 604–625 (PTSATSLASDSTFDSGQGSTVY) shows a compositional bias: polar residues. 2 stretches are compositionally biased toward pro residues: residues 709–740 (VLPPPSTPMPTGPGQPAPPGQQPPPLAQPTPL) and 939–1007 (PPQP…PLQP). A Phosphoserine modification is found at S1150. The segment covering 1167–1178 (ARKHHRRSTRAR) has biased composition (basic residues). S1262 is subject to Phosphoserine. The span at 1392-1406 (SKEQPSFLASQQLLS) shows a compositional bias: polar residues. Positions 1411–1426 (SNPPGAPPAPLAPSSP) are enriched in pro residues. Polar residues-rich tracts occupy residues 1439-1453 (ATSTMPEPASGTASQ) and 1461-1473 (QGLTSELETSQPL). Residues 1510-1520 (EPLPPPAPEPS) show a composition bias toward pro residues. Positions 1526–1544 (PQPALGQPAPLLPAAVGAV) are enriched in low complexity. Residues 1552–1565 (PSPPLGPTVPPQPP) show a composition bias toward pro residues. The residue at position 1588 (S1588) is a Phosphoserine. The segment covering 1621–1631 (TLEPLRGDQPR) has biased composition (basic and acidic residues). Positions 1621 to 1865 (TLEPLRGDQP…PVQKQASLPV (245 aa)) are disordered. A compositionally biased stretch (polar residues) spans 1675-1688 (QGTSSSMTAESSPR). Phosphoserine is present on S1685. Residues 1721-1731 (ARVEPTDRDGG) are compositionally biased toward basic and acidic residues. Phosphoserine occurs at positions 1736, 1817, 1818, 1862, and 1889. Disordered regions lie at residues 1970 to 1990 (NVGFFHTAPPTGRRRKTSKSK) and 2011 to 2031 (TGHLADSSRGPPAKDPAQASV). The span at 1981 to 1990 (GRRRKTSKSK) shows a compositional bias: basic residues. S2067 bears the Phosphoserine mark. Disordered regions lie at residues 2123-2142 (SRSSTSSLAPGPEPGPQPAL) and 2269-2297 (CCGHSTQPRGGQRVGSKTASFAASDPVRS). The segment covering 2272 to 2289 (HSTQPRGGQRVGSKTASF) has biased composition (polar residues).

It belongs to the protein kinase superfamily. Ser/Thr protein kinase family. WNK subfamily. Forms a complex with the phosphorylated form of STK39. The cofactor is Mg(2+). Autophosphorylated. Autophosphorylation at Ser-352 and Ser-356 promotes its activity. In terms of tissue distribution, expressed in various cancer cell lines (at protein level). Predominantly expressed in heart, brain, skeletal muscle and colon.

Its subcellular location is the cytoplasm. It localises to the cell membrane. The enzyme catalyses L-seryl-[protein] + ATP = O-phospho-L-seryl-[protein] + ADP + H(+). It catalyses the reaction L-threonyl-[protein] + ATP = O-phospho-L-threonyl-[protein] + ADP + H(+). With respect to regulation, activation requires autophosphorylation of Ser-356 and, to a lower extent, Ser-352. In terms of biological role, serine/threonine-protein kinase component of the WNK2-SPAK/OSR1 kinase cascade, which plays an important role in the regulation of electrolyte homeostasis, cell signaling, survival, and proliferation. The WNK2-SPAK/OSR1 kinase cascade is composed of WNK2, which mediates phosphorylation and activation of downstream kinases OXSR1/OSR1 and STK39/SPAK. Following activation, OXSR1/OSR1 and STK39/SPAK catalyze phosphorylation of ion cotransporters, regulating their activity. Acts as an activator and inhibitor of sodium-coupled chloride cotransporters and potassium-coupled chloride cotransporters respectively. Activates SLC12A2, SCNN1A, SCNN1B, SCNN1D and SGK1 and inhibits SLC12A5. Negatively regulates the EGF-induced activation of the ERK/MAPK-pathway and the downstream cell cycle progression. Affects MAPK3/MAPK1 activity by modulating the activity of MAP2K1 and this modulation depends on phosphorylation of MAP2K1 by PAK1. WNK2 acts by interfering with the activity of PAK1 by controlling the balance of the activity of upstream regulators of PAK1 activity, RHOA and RAC1, which display reciprocal activity. This is Serine/threonine-protein kinase WNK2 from Homo sapiens (Human).